The sequence spans 88 residues: Small ribosomal subunit protein bS20 (88 aa).

The interval 1-27 (MANSKSAKKRALQSEKRRQHNASRRSM) is disordered.

It belongs to the bacterial ribosomal protein bS20 family.

Functionally, binds directly to 16S ribosomal RNA. The sequence is that of Small ribosomal subunit protein bS20 from Shewanella baltica (strain OS223).